Consider the following 147-residue polypeptide: Transcription elongation factor Spt5 (147 aa).

The region spanning Lys91 to Glu122 is the KOW domain.

It belongs to the archaeal Spt5 family. Heterodimer composed of Spt4 and Spt5. Interacts with RNA polymerase (RNAP). Forms a homodimer in solution.

Stimulates transcription elongation. This Methanocaldococcus jannaschii (strain ATCC 43067 / DSM 2661 / JAL-1 / JCM 10045 / NBRC 100440) (Methanococcus jannaschii) protein is Transcription elongation factor Spt5.